We begin with the raw amino-acid sequence, 91 residues long: Ice-structuring protein (91 aa).

Residues methionine 1–threonine 21 form the signal peptide. Positions glutamate 22–aspartate 39 are cleaved as a propeptide — removed by a dipeptidylpeptidase.

Belongs to the type-I AFP family.

Its subcellular location is the secreted. Its function is as follows. Contributes to protect fish blood from freezing at subzero sea water temperatures. Lowers the blood freezing point. Binds to nascent ice crystals and prevents further growth. This chain is Ice-structuring protein, found in Pseudopleuronectes americanus (Winter flounder).